A 213-amino-acid chain; its full sequence is Orotate phosphoribosyltransferase (213 aa).

Residue Lys26 coordinates 5-phospho-alpha-D-ribose 1-diphosphate. 34-35 (FF) contacts orotate. 5-phospho-alpha-D-ribose 1-diphosphate-binding positions include 72–73 (YK), Arg98, Lys99, Lys102, and 123–131 (DDVISAGTS). Positions 127 and 155 each coordinate orotate.

This sequence belongs to the purine/pyrimidine phosphoribosyltransferase family. PyrE subfamily. In terms of assembly, homodimer. It depends on Mg(2+) as a cofactor.

It catalyses the reaction orotidine 5'-phosphate + diphosphate = orotate + 5-phospho-alpha-D-ribose 1-diphosphate. Its pathway is pyrimidine metabolism; UMP biosynthesis via de novo pathway; UMP from orotate: step 1/2. In terms of biological role, catalyzes the transfer of a ribosyl phosphate group from 5-phosphoribose 1-diphosphate to orotate, leading to the formation of orotidine monophosphate (OMP). The chain is Orotate phosphoribosyltransferase from Neisseria gonorrhoeae (strain ATCC 700825 / FA 1090).